The primary structure comprises 307 residues: ATP synthase gamma chain (307 aa).

Belongs to the ATPase gamma chain family. F-type ATPases have 2 components, CF(1) - the catalytic core - and CF(0) - the membrane proton channel. CF(1) has five subunits: alpha(3), beta(3), gamma(1), delta(1), epsilon(1). CF(0) has three main subunits: a, b and c.

It localises to the cell membrane. In terms of biological role, produces ATP from ADP in the presence of a proton gradient across the membrane. The gamma chain is believed to be important in regulating ATPase activity and the flow of protons through the CF(0) complex. The sequence is that of ATP synthase gamma chain from Bifidobacterium longum subsp. infantis (strain ATCC 15697 / DSM 20088 / JCM 1222 / NCTC 11817 / S12).